Here is a 125-residue protein sequence, read N- to C-terminus: MALKDTAKKMTDLLESIQQNLLKAEKGNKAAAQRVRTESIKLEKIAKVYRKESIKAEKMGLMKRSKVAAKKAKAAAKKPAKATKVVTKKACTKKTCATKAKAKPVKKAATKTKAKVTKKVRSTKK.

The protein belongs to the histone H1/H5 family. HCT subfamily.

Might have a role analogous to that of eukaryotic histone proteins. This is Histone H1-like protein HC1 (hctA) from Chlamydia muridarum (strain MoPn / Nigg).